A 90-amino-acid chain; its full sequence is Small ribosomal subunit protein uS19 (90 aa).

The protein belongs to the universal ribosomal protein uS19 family.

Functionally, protein S19 forms a complex with S13 that binds strongly to the 16S ribosomal RNA. The protein is Small ribosomal subunit protein uS19 of Rhizorhabdus wittichii (strain DSM 6014 / CCUG 31198 / JCM 15750 / NBRC 105917 / EY 4224 / RW1) (Sphingomonas wittichii).